The primary structure comprises 435 residues: GTPase Obg (435 aa).

An Obg domain is found at A6 to L164. Positions A165–R335 constitute an OBG-type G domain. GTP is bound by residues G171–S178, F196–I200, D217–G220, N287–D290, and S316–V318. Mg(2+) contacts are provided by S178 and T198. The OCT domain occupies R357–E435.

This sequence belongs to the TRAFAC class OBG-HflX-like GTPase superfamily. OBG GTPase family. As to quaternary structure, monomer. Requires Mg(2+) as cofactor.

It localises to the cytoplasm. Its function is as follows. An essential GTPase which binds GTP, GDP and possibly (p)ppGpp with moderate affinity, with high nucleotide exchange rates and a fairly low GTP hydrolysis rate. Plays a role in control of the cell cycle, stress response, ribosome biogenesis and in those bacteria that undergo differentiation, in morphogenesis control. The chain is GTPase Obg from Thermotoga petrophila (strain ATCC BAA-488 / DSM 13995 / JCM 10881 / RKU-1).